Here is a 269-residue protein sequence, read N- to C-terminus: Hdr-like menaquinol oxidoreductase iron-sulfur subunit 1 (269 aa).

Residues 1–26 (MMSRRKFLLLTGAAAAGAILTPQISA) constitute a signal peptide (tat-type signal). Residues Cys52, Cys55, Cys72, Cys76, Cys118, Cys121, Cys126, Cys130, Cys150, Cys153, Cys156, Cys160, Cys194, Cys197, Cys215, and Cys219 each contribute to the [4Fe-4S] cluster site. The 30-residue stretch at 141–170 (GIVEIDMHRCIGCRYCMIACPYGARCFNFI) folds into the 4Fe-4S ferredoxin-type domain.

As to quaternary structure, consists of five subunits: an integral membrane subunit, a cytochrome b-like subunit, a cytochrome c subunit and two iron-sulfur subunits. [4Fe-4S] cluster serves as cofactor. Post-translationally, predicted to be exported by the Tat system. The position of the signal peptide cleavage has been experimentally proven.

The protein localises to the cell membrane. Has menaquinol-oxidizing activity. HmeA, HmeB and HmeE subunits may together catalyze electron transfer from menaquinol to cytochrome c. This Archaeoglobus fulgidus (strain ATCC 49558 / DSM 4304 / JCM 9628 / NBRC 100126 / VC-16) protein is Hdr-like menaquinol oxidoreductase iron-sulfur subunit 1 (hmeA).